Here is a 237-residue protein sequence, read N- to C-terminus: Dihydroceramide fatty acyl 2-hydroxylase FAH1 (237 aa).

2 consecutive transmembrane segments (helical) span residues 50–70 and 80–100; these read LTLT…VWCI and LPEI…FEYV. Residues His102, His107, His123, His126, and His127 each contribute to the Zn(2+) site. Transmembrane regions (helical) follow at residues 137 to 157 and 164 to 184; these read VFPP…AKAI and PALF…HYYL. The Zn(2+) site is built by His181, His185, His201, His204, and His205.

The protein belongs to the sterol desaturase family. Interacts with CYTB5-A, CYTB5-B, CYTB5-C and CYTB5-D. Interacts indirectly with BI-1 via CYTB5-D. The cofactor is Zn(2+). In terms of tissue distribution, expressed in leaves, roots, flowers and seeds.

Its subcellular location is the endoplasmic reticulum membrane. It carries out the reaction an N-(1,2-saturated acyl)sphinganine + 2 Fe(II)-[cytochrome b5] + O2 + 2 H(+) = an N-[(2'R)-hydroxyacyl]sphinganine + 2 Fe(III)-[cytochrome b5] + H2O. Functionally, fatty acid 2-hydroxylase involved in the alpha-hydroxylation of sphingolipid-associated very long-chain fatty acids (VLCFA). Probably involved in the resistance response to oxidative stress. In Arabidopsis thaliana (Mouse-ear cress), this protein is Dihydroceramide fatty acyl 2-hydroxylase FAH1.